The chain runs to 258 residues: Acyl-[acyl-carrier-protein]--UDP-N-acetylglucosamine O-acyltransferase (258 aa).

It belongs to the transferase hexapeptide repeat family. LpxA subfamily. Homotrimer.

It localises to the cytoplasm. It catalyses the reaction a (3R)-hydroxyacyl-[ACP] + UDP-N-acetyl-alpha-D-glucosamine = a UDP-3-O-[(3R)-3-hydroxyacyl]-N-acetyl-alpha-D-glucosamine + holo-[ACP]. It participates in glycolipid biosynthesis; lipid IV(A) biosynthesis; lipid IV(A) from (3R)-3-hydroxytetradecanoyl-[acyl-carrier-protein] and UDP-N-acetyl-alpha-D-glucosamine: step 1/6. In terms of biological role, involved in the biosynthesis of lipid A, a phosphorylated glycolipid that anchors the lipopolysaccharide to the outer membrane of the cell. In Pseudomonas aeruginosa (strain LESB58), this protein is Acyl-[acyl-carrier-protein]--UDP-N-acetylglucosamine O-acyltransferase.